A 121-amino-acid chain; its full sequence is Large ribosomal subunit protein uL24 (121 aa).

Belongs to the universal ribosomal protein uL24 family. As to quaternary structure, part of the 50S ribosomal subunit.

One of two assembly initiator proteins, it binds directly to the 5'-end of the 23S rRNA, where it nucleates assembly of the 50S subunit. Its function is as follows. Located at the polypeptide exit tunnel on the outside of the subunit. This Pyrococcus horikoshii (strain ATCC 700860 / DSM 12428 / JCM 9974 / NBRC 100139 / OT-3) protein is Large ribosomal subunit protein uL24.